The sequence spans 234 residues: Large ribosomal subunit protein uL1 (234 aa).

This sequence belongs to the universal ribosomal protein uL1 family. Part of the 50S ribosomal subunit.

In terms of biological role, binds directly to 23S rRNA. The L1 stalk is quite mobile in the ribosome, and is involved in E site tRNA release. Its function is as follows. Protein L1 is also a translational repressor protein, it controls the translation of the L11 operon by binding to its mRNA. This chain is Large ribosomal subunit protein uL1, found in Escherichia coli (strain 55989 / EAEC).